Reading from the N-terminus, the 232-residue chain is Sugar fermentation stimulation protein homolog (232 aa).

The protein belongs to the SfsA family.

The polypeptide is Sugar fermentation stimulation protein homolog (Shouchella clausii (strain KSM-K16) (Alkalihalobacillus clausii)).